The primary structure comprises 117 residues: Crustacean hyperglycemic hormones 3 (117 aa).

Positions 1 to 24 (MVTPRMLSALSAVLLLVLTASSSA) are cleaved as a signal peptide. Intrachain disulfides connect Cys-50–Cys-86, Cys-66–Cys-82, and Cys-69–Cys-95. Val-115 is subject to Valine amide.

This sequence belongs to the arthropod CHH/MIH/GIH/VIH hormone family. In terms of tissue distribution, produced by the medulla terminalis X-organ in the eyestalks and transported to the sinus gland where they are stored and released.

It localises to the secreted. Hormone found in the sinus gland of isopods and decapods which controls the blood sugar level. Has a secretagogue action over the amylase released from the midgut gland. May act as a stress hormone and may be involved in the control of molting and reproduction. This chain is Crustacean hyperglycemic hormones 3, found in Penaeus japonicus (Kuruma prawn).